The primary structure comprises 78 residues: MAKPPVRKPKKKVCAFCKDKTQYVDYKDTNMLRKFISDRGKIRARRVTGNCTQHQRDVATAVKNSREMALLPYTSTAR.

It belongs to the bacterial ribosomal protein bS18 family. In terms of assembly, part of the 30S ribosomal subunit. Forms a tight heterodimer with protein bS6.

Its function is as follows. Binds as a heterodimer with protein bS6 to the central domain of the 16S rRNA, where it helps stabilize the platform of the 30S subunit. This Streptomyces griseus subsp. griseus (strain JCM 4626 / CBS 651.72 / NBRC 13350 / KCC S-0626 / ISP 5235) protein is Small ribosomal subunit protein bS18B.